Reading from the N-terminus, the 719-residue chain is Probable phosphatidylinositol phosphate kinase DDB_G0267588 (719 aa).

Positions 47–261 are disordered; that stretch reads VFSPIPPPPS…SDSPNRVRLN (215 aa). Composition is skewed to low complexity over residues 57–77 and 87–104; these read TTDNTTNTTTTTIETTATDNT and IENNNNNNNSSISSPNSI. Over residues 107–129 the composition is skewed to basic and acidic residues; the sequence is ANKKDSIELEEDKEHSIKRKDGS. Positions 172 to 184 are enriched in polar residues; that stretch reads FDATNDNHNPQEV. Positions 199 to 217 are enriched in low complexity; sequence TTTTTTTTTTTTSTNSTSN. Composition is skewed to polar residues over residues 218-228 and 248-261; these read KLPNNGDNTVS and ASGSSDSPNRVRLN. At T262 the chain carries Phosphothreonine. The region spanning 316–718 is the PIPK domain; that stretch reads NAVGKSMGTE…RFQEFLSTII (403 aa). Residues 579–638 are disordered; that stretch reads RENEPPSPSLLRSTLEDSSDFESPSMEQSSAGQQQQQRGSGNYDNSGAGRDSTTGGAAPK. Residues 606-619 show a composition bias toward low complexity; sequence QSSAGQQQQQRGSG.

Post-translationally, phosphorylated at Thr-262 by pkgB.

Functionally, may be involved in signaling events that underlie chemotaxis via the chemoattractant-mediated pkgB phosphorylation. The protein is Probable phosphatidylinositol phosphate kinase DDB_G0267588 of Dictyostelium discoideum (Social amoeba).